The sequence spans 54 residues: Ovomucoid (54 aa).

In terms of domain architecture, Kazal-like spans 4 to 54 (VDCSEYPKPVCSPEYMPLCGSDSKTYNNKCDFCSAVVESNGTLTLGHFGKC). Intrachain disulfides connect cysteine 6-cysteine 36, cysteine 14-cysteine 33, and cysteine 22-cysteine 54. Asparagine 43 is a glycosylation site (N-linked (GlcNAc...) asparagine).

Its subcellular location is the secreted. The sequence is that of Ovomucoid from Casuarius casuarius (Southern cassowary).